Consider the following 592-residue polypeptide: Protein alan shepard (592 aa).

Residues 1–68 are disordered; sequence MGGPHHQHQQ…ASVAAAPPTP (68 aa). Over residues 18 to 28 the composition is skewed to gly residues; that stretch reads VGGGNGHGGGA. Residues 36–54 show a composition bias toward polar residues; it reads PNSQQLPPQMPRSQNYANG. Positions 55–64 are enriched in low complexity; it reads SSSAASVAAA. Residues Tyr-124 and Tyr-140 each carry the phosphotyrosine modification. The segment at 162-224 is disordered; the sequence is PATTTYGQRV…AQNQNQQGGE (63 aa). Positions 176–224 are enriched in low complexity; it reads SPSNTNSSSSSNTGSQSGTLSTSLSNTTNTNTTMGPNGTAQNQNQQGGE. RRM domains lie at 229–307 and 319–398; these read TNLY…IWVL and TNLY…FADG. The disordered stretch occupies residues 565–592; the sequence is PMTDSEQASTAASPDEAYTQYPHQAAPK.

Has a role in the perception of gravity. This chain is Protein alan shepard, found in Drosophila mojavensis (Fruit fly).